The sequence spans 385 residues: S-adenosylmethionine synthase (385 aa).

Position 15 (H15) interacts with ATP. D17 is a Mg(2+) binding site. Residue E43 coordinates K(+). L-methionine contacts are provided by E56 and Q99. Residues 99 to 109 (QSPDINKGINN) form a flexible loop region. ATP is bound by residues 164–166 (DAK), 230–231 (RF), D239, 245–246 (RK), A262, and K266. D239 lines the L-methionine pocket. An L-methionine-binding site is contributed by K270.

Belongs to the AdoMet synthase family. As to quaternary structure, homotetramer; dimer of dimers. It depends on Mg(2+) as a cofactor. K(+) is required as a cofactor.

It localises to the cytoplasm. The enzyme catalyses L-methionine + ATP + H2O = S-adenosyl-L-methionine + phosphate + diphosphate. It functions in the pathway amino-acid biosynthesis; S-adenosyl-L-methionine biosynthesis; S-adenosyl-L-methionine from L-methionine: step 1/1. Functionally, catalyzes the formation of S-adenosylmethionine (AdoMet) from methionine and ATP. The overall synthetic reaction is composed of two sequential steps, AdoMet formation and the subsequent tripolyphosphate hydrolysis which occurs prior to release of AdoMet from the enzyme. This Baumannia cicadellinicola subsp. Homalodisca coagulata protein is S-adenosylmethionine synthase.